The sequence spans 180 residues: Large ribosomal subunit protein uL6 (180 aa).

This sequence belongs to the universal ribosomal protein uL6 family. In terms of assembly, part of the 50S ribosomal subunit.

Its function is as follows. This protein binds to the 23S rRNA, and is important in its secondary structure. It is located near the subunit interface in the base of the L7/L12 stalk, and near the tRNA binding site of the peptidyltransferase center. This Clostridium botulinum (strain Langeland / NCTC 10281 / Type F) protein is Large ribosomal subunit protein uL6.